A 673-amino-acid chain; its full sequence is UvrABC system protein B (673 aa).

Positions 24-182 (EGVERNDPAQ…YSFVEILYNR (159 aa)) constitute a Helicase ATP-binding domain. 37 to 44 (GVTGSGKT) provides a ligand contact to ATP. The short motif at 90 to 113 (YYDYYQPEAFMPTSGLYIEKDLAI) is the Beta-hairpin element. Residues 429-591 (QIDDLLDEIQ…ITPITVNKSK (163 aa)) form the Helicase C-terminal domain. The 36-residue stretch at 634–669 (TKMIDRAKKDMDKAAKDLDFVEAARYRDEMFALQKI) folds into the UVR domain.

It belongs to the UvrB family. In terms of assembly, forms a heterotetramer with UvrA during the search for lesions. Interacts with UvrC in an incision complex.

The protein resides in the cytoplasm. In terms of biological role, the UvrABC repair system catalyzes the recognition and processing of DNA lesions. A damage recognition complex composed of 2 UvrA and 2 UvrB subunits scans DNA for abnormalities. Upon binding of the UvrA(2)B(2) complex to a putative damaged site, the DNA wraps around one UvrB monomer. DNA wrap is dependent on ATP binding by UvrB and probably causes local melting of the DNA helix, facilitating insertion of UvrB beta-hairpin between the DNA strands. Then UvrB probes one DNA strand for the presence of a lesion. If a lesion is found the UvrA subunits dissociate and the UvrB-DNA preincision complex is formed. This complex is subsequently bound by UvrC and the second UvrB is released. If no lesion is found, the DNA wraps around the other UvrB subunit that will check the other stand for damage. This Cytophaga hutchinsonii (strain ATCC 33406 / DSM 1761 / CIP 103989 / NBRC 15051 / NCIMB 9469 / D465) protein is UvrABC system protein B.